We begin with the raw amino-acid sequence, 185 residues long: Peptidyl-tRNA hydrolase (185 aa).

A tRNA-binding site is contributed by Tyr-14. His-19 acts as the Proton acceptor in catalysis. Positions 64, 66, and 112 each coordinate tRNA.

The protein belongs to the PTH family. In terms of assembly, monomer.

The protein resides in the cytoplasm. The enzyme catalyses an N-acyl-L-alpha-aminoacyl-tRNA + H2O = an N-acyl-L-amino acid + a tRNA + H(+). Hydrolyzes ribosome-free peptidyl-tRNAs (with 1 or more amino acids incorporated), which drop off the ribosome during protein synthesis, or as a result of ribosome stalling. In terms of biological role, catalyzes the release of premature peptidyl moieties from peptidyl-tRNA molecules trapped in stalled 50S ribosomal subunits, and thus maintains levels of free tRNAs and 50S ribosomes. In Lactobacillus acidophilus (strain ATCC 700396 / NCK56 / N2 / NCFM), this protein is Peptidyl-tRNA hydrolase.